We begin with the raw amino-acid sequence, 723 residues long: Epidermal growth factor receptor kinase substrate 8-like protein 1 (723 aa).

The region spanning 35–164 (QYPVNHLVTF…LHNYRSGRGE (130 aa)) is the PTB domain. The span at 162–183 (RGERRAAALRATQEELQRDRSP) shows a compositional bias: basic and acidic residues. Disordered stretches follow at residues 162–247 (RGER…PRGP), 442–477 (KQLQ…LESE), 537–589 (GPRL…GLDP), and 609–636 (LAQG…GSDA). Ser182 carries the phosphoserine modification. Thr187 carries the post-translational modification Phosphothreonine. An SH3 domain is found at 478–537 (TAGKWVLCNYDFQARNSSELSVKQRDVLEVLDDSRKWWKVRDPAGQEGYVPYNILTPYPG). The segment covering 543-552 (SQSPARSLNS) has biased composition (polar residues). Positions 553-568 (TPPPPPAPAPAPPPAL) are enriched in pro residues. Over residues 571–580 (PRWDRPRWDS) the composition is skewed to basic and acidic residues. Residues 689-719 (VQRSLLEDKEKVSELEAVMEKQKKKVEGEVE) are a coiled coil.

This sequence belongs to the EPS8 family. In terms of assembly, interacts with ABI1. Part of a complex that contains SOS1, ABI1 and EPS8L2. Associates with F-actin. As to expression, detected in placenta.

The protein localises to the cytoplasm. In terms of biological role, stimulates guanine exchange activity of SOS1. May play a role in membrane ruffling and remodeling of the actin cytoskeleton. The polypeptide is Epidermal growth factor receptor kinase substrate 8-like protein 1 (EPS8L1) (Homo sapiens (Human)).